We begin with the raw amino-acid sequence, 290 residues long: Acetyl-coenzyme A carboxylase carboxyl transferase subunit beta (290 aa).

Residues 27-290 (LWVKCPSCEA…LQRQPADALA (264 aa)) form the CoA carboxyltransferase N-terminal domain. Cysteine 31, cysteine 34, cysteine 50, and cysteine 53 together coordinate Zn(2+). The C4-type zinc finger occupies 31–53 (CPSCEAVLYRNDVDANLHVCPKC).

It belongs to the AccD/PCCB family. In terms of assembly, acetyl-CoA carboxylase is a heterohexamer composed of biotin carboxyl carrier protein (AccB), biotin carboxylase (AccC) and two subunits each of ACCase subunit alpha (AccA) and ACCase subunit beta (AccD). It depends on Zn(2+) as a cofactor.

It is found in the cytoplasm. The catalysed reaction is N(6)-carboxybiotinyl-L-lysyl-[protein] + acetyl-CoA = N(6)-biotinyl-L-lysyl-[protein] + malonyl-CoA. Its pathway is lipid metabolism; malonyl-CoA biosynthesis; malonyl-CoA from acetyl-CoA: step 1/1. Component of the acetyl coenzyme A carboxylase (ACC) complex. Biotin carboxylase (BC) catalyzes the carboxylation of biotin on its carrier protein (BCCP) and then the CO(2) group is transferred by the transcarboxylase to acetyl-CoA to form malonyl-CoA. The polypeptide is Acetyl-coenzyme A carboxylase carboxyl transferase subunit beta (Burkholderia cenocepacia (strain ATCC BAA-245 / DSM 16553 / LMG 16656 / NCTC 13227 / J2315 / CF5610) (Burkholderia cepacia (strain J2315))).